Reading from the N-terminus, the 2629-residue chain is Telomerase protein component 1 (2629 aa).

TEP1 N-terminal repeat units follow at residues 1–30 (MEKLCGHVPGHSDILSLKNRCLTMLPDLQP), 31–60 (LEKIHGHRSVHSDILSLENQCLTMLSDLQP), 61–90 (TERIDGHISVHPDILSLENRCLTMLPDLQP), and 91–120 (LEKLCGHMSSHPDVLSLENQCLATLPTVKS). The TROVE domain occupies 227-685 (LKLTSGDSGF…VKHNLSPMPG (459 aa)). Over residues 386-397 (PRKHRSKRRSRQ) the composition is skewed to basic residues. Positions 386 to 412 (PRKHRSKRRSRQPPRPQKTERPFSERG) are disordered. Residues 402–412 (QKTERPFSERG) show a composition bias toward basic and acidic residues. The 408-residue stretch at 1171–1578 (RLSLVTGQAG…EFLTNLHVVA (408 aa)) folds into the NACHT domain. An ATP-binding site is contributed by 1177–1184 (GQAGQGKT). 21 WD repeats span residues 1420–1462 (VLPQ…EVLA), 1681–1720 (TMSSSPTAVAFSPNGQRAAVGTASGTIYLLNLKTWQEEKA), 1723–1761 (SGCDGISSFAFLSDTALFLTTFDGHLELWDLQHGCWVFQ), 1764–1803 (AHQYQITGCCLSPDRRLLATVCLGGYLKLWDTVRGQLAFQ), 1805–1844 (THPKSLNCVAFHPEGQVVATGSWAGSITFFQADGLKVTKE), 1847–1886 (APGPSVCSLAFNKPGKIVAVGRIDGTVELWAWQEGARLAA), 1889–1930 (AQCG…GCLG), 1932–1971 (LPLSPALSVALNPDGDQVAVGYREDGINIYKISSGSQGPQ), 1974–2013 (ELNVAVSALVWLSPSVLVSGAEDGSLHGWMFKGDSLHSLW), 2015–2054 (LSRYQKPVLGLAASRELMAAASEDFTVRLWPRQLLTQPHV), 2067–2106 (GHEGPVCCCSFSPDGGILATAGRDRNLLCWDMKIAQAPLL), 2113–2151 (CHRDWITGCAWTKDNILVSCSSDGSVGLWNPEAGQQLGQ), 2154–2191 (GHQSAVSAVVAVEEHIVSVSRDGTLKVWDHQGVELTSI), 2193–2241 (AHSG…QIRT), 2244–2282 (GHSGPVTAAAASEASGLLLTSDDSSVQLWQIPKEADDSY), 2285–2324 (RSSVAITAVAWAPDGSMVVSGNEAGELTLWQQAKAVATAQ), 2326–2362 (PGRVSHLIWYSANSFFVLSANENVSEWQVGLRKGSTS), 2375–2424 (EDWG…SSIL), 2467–2507 (PNGS…GEWI), 2555–2592 (IHLGSVTALHVLPGLLVTASKDRDVKLWERPSMQLLGL), and 2594–2628 (RCEGPVSCLEPWMEPSSPLQLAVGDTQGNLYFLSW).

In terms of assembly, associated component of the telomerase holoenzyme complex. Component of the vault ribonucleoprotein particle, at least composed of MVP, PARP4 and one or more vault RNAs (vRNAs). Binds to VAULTRC1, VAULTRC2 and VAULTRC4/hvg4 vRNAs. As to expression, ubiquitous.

Its subcellular location is the nucleus. It is found in the chromosome. It localises to the telomere. Its function is as follows. Component of the telomerase ribonucleoprotein complex that is essential for the replication of chromosome termini. Also a component of the ribonucleoprotein vaults particle, a multi-subunit structure involved in nucleo-cytoplasmic transport. Responsible for the localizing and stabilizing vault RNA (vRNA) association in the vault ribonucleoprotein particle. This is Telomerase protein component 1 (Tep1) from Mus musculus (Mouse).